The following is a 74-amino-acid chain: UPF0352 protein HAPS_0210 (74 aa).

Belongs to the UPF0352 family.

This is UPF0352 protein HAPS_0210 from Glaesserella parasuis serovar 5 (strain SH0165) (Haemophilus parasuis).